The chain runs to 147 residues: Deoxyuridine 5'-triphosphate nucleotidohydrolase (147 aa).

Substrate is bound by residues 67–69, N80, and 84–86; these read RSG and LID.

The protein belongs to the dUTPase family. It depends on Mg(2+) as a cofactor.

The enzyme catalyses dUTP + H2O = dUMP + diphosphate + H(+). It participates in pyrimidine metabolism; dUMP biosynthesis; dUMP from dCTP (dUTP route): step 2/2. Functionally, this enzyme is involved in nucleotide metabolism: it produces dUMP, the immediate precursor of thymidine nucleotides and it decreases the intracellular concentration of dUTP so that uracil cannot be incorporated into DNA. The polypeptide is Deoxyuridine 5'-triphosphate nucleotidohydrolase (Gloeobacter violaceus (strain ATCC 29082 / PCC 7421)).